The sequence spans 341 residues: Eukaryotic translation initiation factor 3 subunit I (341 aa).

WD repeat units follow at residues 8–49 (GHER…GTYR), 50–91 (GHQG…KTWD), 135–184 (QSDE…LLYN), 189–228 (ELNQ…VLKS), and 286–325 (GHFG…YDFL).

It belongs to the eIF-3 subunit I family. As to quaternary structure, component of the eukaryotic translation initiation factor 3 (eIF-3) complex.

Its subcellular location is the cytoplasm. Its function is as follows. Component of the eukaryotic translation initiation factor 3 (eIF-3) complex, which is involved in protein synthesis of a specialized repertoire of mRNAs and, together with other initiation factors, stimulates binding of mRNA and methionyl-tRNAi to the 40S ribosome. The eIF-3 complex specifically targets and initiates translation of a subset of mRNAs involved in cell proliferation. The polypeptide is Eukaryotic translation initiation factor 3 subunit I (Chaetomium globosum (strain ATCC 6205 / CBS 148.51 / DSM 1962 / NBRC 6347 / NRRL 1970) (Soil fungus)).